The primary structure comprises 116 residues: Large ribosomal subunit protein uL22 (116 aa).

Belongs to the universal ribosomal protein uL22 family. Part of the 50S ribosomal subunit.

Functionally, this protein binds specifically to 23S rRNA; its binding is stimulated by other ribosomal proteins, e.g. L4, L17, and L20. It is important during the early stages of 50S assembly. It makes multiple contacts with different domains of the 23S rRNA in the assembled 50S subunit and ribosome. In terms of biological role, the globular domain of the protein is located near the polypeptide exit tunnel on the outside of the subunit, while an extended beta-hairpin is found that lines the wall of the exit tunnel in the center of the 70S ribosome. The protein is Large ribosomal subunit protein uL22 of Leptospira biflexa serovar Patoc (strain Patoc 1 / Ames).